We begin with the raw amino-acid sequence, 545 residues long: Acetyltransferase BOT5 (545 aa).

Positions 1 to 19 are cleaved as a signal peptide; sequence MATIPLFFSLILFLRLYHA. Asn70 and Asn198 each carry an N-linked (GlcNAc...) asparagine glycan. His208 serves as the catalytic Proton acceptor. Asn346 and Asn445 each carry an N-linked (GlcNAc...) asparagine glycan. The disordered stretch occupies residues 466-493; that stretch reads GAGNQKSSSTRKAARHTEPTQAQTQPGR.

It belongs to the plant acyltransferase family.

The protein operates within secondary metabolite biosynthesis. In terms of biological role, acetyltransferase; part of the gene cluster that mediates the biosynthesis of botrydial. Botrydial is necessary for colonization of plant tissue by the T4 strain. It is a strain-dependent virulence factor since highly aggressive strains like SAS56 or B05 still retain substantial virulence when botrydial synthesis is impaired, since they produce also botcinic acid. The first step of botrydial biosynthesis is performed by the sesquiterpene synthase BOT2 which catalyzes the cyclization of farnesyl diphosphate (FPP) to presilphiperfolan-8-beta-ol (PSP). The cytochrome P450 monooxygenase BOT4 then catalyzes the hydroxylation at C-4 to give a probotryane intermediate. Acetylation of the hydroxyl at C-4 is carried out by the acetyltransferase BOT5, followed by the combined action of the P450 monooxygenases BOT3 and BOT1, to yield finally the glycol, via the regio- and stereospecific hydroxylations at C-10 and C-15 of the probotryane intermediates, respectively. The cleavage of the C10-C15 bond of probotryane skeleton is an intriguing and chemically important reaction, which could be mediated by some of the monooxygenases or by a combination of them. It is possible that either BOT3 or BOT1 would oxidize either the 10- or the 15-hydroxy group to the hydroperoxide derivative, which would then undergo heterolytic fragmentation to give the dialdehyde botrydial. Finally, the dehydrogenase BOT7 might be involved in the conversion of botrydial to dihydrobotrydial. In Botryotinia fuckeliana (Noble rot fungus), this protein is Acetyltransferase BOT5.